A 203-amino-acid chain; its full sequence is Ribosomal RNA large subunit methyltransferase E (203 aa).

The S-adenosyl-L-methionine site is built by glycine 60, tryptophan 62, aspartate 79, aspartate 95, and aspartate 119. Lysine 159 (proton acceptor) is an active-site residue.

Belongs to the class I-like SAM-binding methyltransferase superfamily. RNA methyltransferase RlmE family.

Its subcellular location is the cytoplasm. It catalyses the reaction uridine(2552) in 23S rRNA + S-adenosyl-L-methionine = 2'-O-methyluridine(2552) in 23S rRNA + S-adenosyl-L-homocysteine + H(+). In terms of biological role, specifically methylates the uridine in position 2552 of 23S rRNA at the 2'-O position of the ribose in the fully assembled 50S ribosomal subunit. In Pelagibacter ubique (strain HTCC1062), this protein is Ribosomal RNA large subunit methyltransferase E.